The primary structure comprises 424 residues: Glutamyl-tRNA reductase (424 aa).

Substrate-binding positions include 49–52 (TCNR), serine 107, 112–114 (EPQ), and glutamine 118. The active-site Nucleophile is the cysteine 50. 187–192 (GAGETI) is an NADP(+) binding site.

It belongs to the glutamyl-tRNA reductase family. Homodimer.

It carries out the reaction (S)-4-amino-5-oxopentanoate + tRNA(Glu) + NADP(+) = L-glutamyl-tRNA(Glu) + NADPH + H(+). Its pathway is porphyrin-containing compound metabolism; protoporphyrin-IX biosynthesis; 5-aminolevulinate from L-glutamyl-tRNA(Glu): step 1/2. Its function is as follows. Catalyzes the NADPH-dependent reduction of glutamyl-tRNA(Glu) to glutamate 1-semialdehyde (GSA). This Pseudomonas fluorescens (strain ATCC BAA-477 / NRRL B-23932 / Pf-5) protein is Glutamyl-tRNA reductase.